The primary structure comprises 402 residues: O-glucosyltransferase rumi homolog (402 aa).

The N-terminal stretch at 1-20 (MPYLEIVLALLVLSFQLGHS) is a signal peptide. 4 disulfide bridges follow: C67–C74, C72–C375, C118–C124, and C279–C302. The N-linked (GlcNAc...) asparagine glycan is linked to N71. Residue D149 is the Proton donor/acceptor of the active site. Residues 189–194 (AISLYP) form an interaction with the consensus sequence C-X-S-X-[PA]-C in peptide substrates region. UDP-alpha-D-glucose-binding positions include 226–230 (RGSRT), R234, 273–275 (VRL), and 291–295 (AASFR).

The protein belongs to the glycosyltransferase 90 family.

It is found in the endoplasmic reticulum lumen. The protein resides in the secreted. The protein operates within protein modification; protein glycosylation. Protein O-glucosyltransferase. Catalyzes the reaction that attaches glucose through an O-glycosidic linkage to a conserved serine residue found in the consensus sequence C-X-S-X-[PA]-C in epidermal growth factor-like repeats. Regulates Notch signaling by glucosylating Notch in the ER, glucosylation is required for the correct folding and cleavage of Notch. This Aedes aegypti (Yellowfever mosquito) protein is O-glucosyltransferase rumi homolog.